The chain runs to 241 residues: Chaperone protein HifB (241 aa).

A signal peptide spans methionine 1–asparagine 27.

This sequence belongs to the periplasmic pilus chaperone family.

It localises to the periplasm. Its function is as follows. Mediates assembly of pili by forming soluble multimeric complexes with pili subunits as an intermediate step in the assembly process. This protein is involved in type B pili (HifA) assembly. In Haemophilus influenzae, this protein is Chaperone protein HifB (hifB).